Here is a 368-residue protein sequence, read N- to C-terminus: Glutamate 5-kinase (368 aa).

Lys13 contacts ATP. Positions 54, 141, and 153 each coordinate substrate. Residue 173-174 (SD) coordinates ATP. Positions 278–355 (KGSLRLDAGA…DEIPEILGYP (78 aa)) constitute a PUA domain.

It belongs to the glutamate 5-kinase family.

It is found in the cytoplasm. It catalyses the reaction L-glutamate + ATP = L-glutamyl 5-phosphate + ADP. Its pathway is amino-acid biosynthesis; L-proline biosynthesis; L-glutamate 5-semialdehyde from L-glutamate: step 1/2. Functionally, catalyzes the transfer of a phosphate group to glutamate to form L-glutamate 5-phosphate. The polypeptide is Glutamate 5-kinase (Jannaschia sp. (strain CCS1)).